The chain runs to 576 residues: Alpha-bisabolol synthase (576 aa).

Residues R286, D323, D327, R466, and N469 each coordinate (2E,6E)-farnesyl diphosphate. The Mg(2+) site is built by D323 and D327. The DDXXD motif signature appears at 323–327 (DDVYD). Positions 469, 473, and 477 each coordinate Mg(2+).

This sequence belongs to the terpene synthase family. Tpsb subfamily. Requires Mg(2+) as cofactor. Mn(2+) is required as a cofactor.

Produces a mixture of beta-bisabolene and alpha-bisabolol, along with traces of alpha-bisabolene and farnesene isomers from (2E,6E)-farnesyl diphosphate in fragrance biosynthesis. In Santalum spicatum (Australian sandalwood), this protein is Alpha-bisabolol synthase.